A 209-amino-acid polypeptide reads, in one-letter code: Uridine kinase (209 aa).

12-19 (GGSASGKT) serves as a coordination point for ATP.

This sequence belongs to the uridine kinase family.

It localises to the cytoplasm. The enzyme catalyses uridine + ATP = UMP + ADP + H(+). The catalysed reaction is cytidine + ATP = CMP + ADP + H(+). It functions in the pathway pyrimidine metabolism; CTP biosynthesis via salvage pathway; CTP from cytidine: step 1/3. The protein operates within pyrimidine metabolism; UMP biosynthesis via salvage pathway; UMP from uridine: step 1/1. This is Uridine kinase from Chloroflexus aurantiacus (strain ATCC 29366 / DSM 635 / J-10-fl).